We begin with the raw amino-acid sequence, 520 residues long: 2-methylcitrate dehydratase, mitochondrial (520 aa).

Residues 1–37 (MRAFRSAANFGAASNIYRKSFTPASIASNRFVSARMS) constitute a mitochondrion transit peptide.

The protein belongs to the PrpD family. In terms of assembly, monomer.

It localises to the mitochondrion. The enzyme catalyses (2S,3S)-2-methylcitrate = 2-methyl-cis-aconitate + H2O. The protein operates within organic acid metabolism; propanoate degradation. Several bivalent metal ions, such as nickel, copper, zinc, mercury, and lead, inhibit the activity to some extent. Inhibited by structural analogs such as citrate, cis-aconitate, isocitrate, 2-methylisocitrate, tricarballylate and fluorocitrate, but not by trans-aconitate or adipate. Its function is as follows. Component of the methylcitrate cycle that catalyzes the dehydration of 2-methylcitrate to 2-methyl-cis-aconitate. The methylcitrate cycle is a metabolic pathway for the consumption of propionic acid. The chain is 2-methylcitrate dehydratase, mitochondrial from Yarrowia lipolytica (strain CLIB 122 / E 150) (Yeast).